A 421-amino-acid chain; its full sequence is UV-B-induced protein At3g17800, chloroplastic (421 aa).

Disordered regions lie at residues 1–40 and 74–95; these read MDAL…RSGS and VRAS…IAPL. A chloroplast-targeting transit peptide spans 1–75; sequence MDALTSSLVR…AKTRRSFVVR (75 aa). The segment covering 16 to 28 has biased composition (polar residues); the sequence is SRTSDNGSGSMFL. A compositionally biased stretch (low complexity) spans 74 to 88; that stretch reads VRASSASNDASSGSS.

The protein localises to the plastid. Its subcellular location is the chloroplast. This Arabidopsis thaliana (Mouse-ear cress) protein is UV-B-induced protein At3g17800, chloroplastic.